The following is a 492-amino-acid chain: RNA helicase CrhR (492 aa).

Residues 7–35 (STFADLGLSEKRCQLLADIGFEAPTQIQT) carry the Q motif motif. The Helicase ATP-binding domain occupies 38–207 (IPLLLSGRDM…NQFLNDPALV (170 aa)). 51 to 58 (SQTGTGKT) lines the ATP pocket. The DEAD box motif lies at 155-158 (DEAD). A Helicase C-terminal domain is found at 234 to 379 (KALQPILEME…VCTIPNRSQV (146 aa)). Positions 451–492 (VLRRGRNAGGGQNKSGGGYQGKPGKPRRSSGGRRPAYSDRQQ) are disordered. The span at 457-471 (NAGGGQNKSGGGYQG) shows a compositional bias: gly residues.

The protein belongs to the DEAD box helicase family.

The protein resides in the cytoplasm. Its subcellular location is the cell inner membrane. The protein localises to the cellular thylakoid membrane. The enzyme catalyses ATP + H2O = ADP + phosphate + H(+). With respect to regulation, helicase inhibited by the slowly-hydrolyzing ATP analog ATP-gamma-S. Protein is rapidly degraded upon shifting from 20 to 30 degrees Celsius, the degradation machinery is only transiently present in cells grown at 30 degrees Celsius, is inhibited by commercial protease inhibitors and requires full-length protein expression (the N-terminal fragment does not induce proteolysis although it can be degraded by wild-type extract). In terms of biological role, an ATP-dependent bidirectional RNA helicase with RNA-dependent ATPase activity; does not unwind dsDNA, uses only (d)ATP. Also has ATP-dependent RNA annealing activity; concurrent annealing and helicase activity promote strand-exchange activity. In vitro has low helicase processivity, annealing processivity is probably higher. Required for correct cold adaptation, probably by aiding translation of mRNAs required for photosynthesis and electron transport. Probably regulates the cold-shock-inducible expression of the GroESL chaperones. May partially regulate its own expression at both the transcriptional and post-transcriptional level (experiments used a construct expressing a 25 kDa trunacted protein which might have dominant-negative effects); is probably not directly involved in the pathway responsible for mRNA degradation. This Synechocystis sp. (strain ATCC 27184 / PCC 6803 / Kazusa) protein is RNA helicase CrhR.